Here is a 184-residue protein sequence, read N- to C-terminus: NADH-dependent flavin reductase subunit 2 (184 aa).

Belongs to the NADH-dependent flavin reductase family. Requires LJ_0548 for activity, but the exact composition of the enzyme is unclear.

The catalysed reaction is a reduced flavin + NAD(+) = an oxidized flavin + NADH + 2 H(+). Functionally, component of an enzyme that catalyzes the reduction of free flavins (FMN, FAD and riboflavin) by NADH; the reduced flavins produced by this reaction likely spontaneously react with oxygen, yielding hydrogen peroxide. Is responsible for the major H(2)O(2) production in L.johnsonii in the presence of oxygen. Cannot use NADPH instead of NADH as the electron donor. In Lactobacillus johnsonii (strain CNCM I-12250 / La1 / NCC 533), this protein is NADH-dependent flavin reductase subunit 2 (nfr2).